The primary structure comprises 2837 residues: Probable polyketide synthase 3 (2837 aa).

Positions 39–464 constitute a Ketosynthase family 3 (KS3) domain; sequence NNGIGIIGIG…GSNVCIILKD (426 aa). Residues Cys-209, His-348, and His-388 each act as for beta-ketoacyl synthase activity in the active site. The interval 664–697 is acyl/malonyl transferase; sequence GIKPTFIVGHSLGEVTAAYCSGMIDLETECYLIY. Catalysis depends on Ser-674, which acts as the For acyl/malonyl transferase activity. Residues 962 to 1084 are N-terminal hotdog fold; sequence IDILGNSITD…GNFQLFKHNG (123 aa). The PKS/mFAS DH domain occupies 962–1255; that stretch reads IDILGNSITD…CTSLTPIQDS (294 aa). His-995 serves as the catalytic Proton acceptor; for dehydratase activity. The C-terminal hotdog fold stretch occupies residues 1106-1255; the sequence is NLTKLTKEDL…CTSLTPIQDS (150 aa). Asp-1169 serves as the catalytic Proton donor; for dehydratase activity. Residues 2330–2407 enclose the Carrier domain; it reads DNKNSVNQMF…SSIKIITNSL (78 aa). Ser-2367 carries the O-(pantetheine 4'-phosphoryl)serine modification. The helical transmembrane segment at 2464–2484 threads the bilayer; sequence KVILLSGSTGFLGGYLLLNLV.

It depends on pantetheine 4'-phosphate as a cofactor.

It localises to the membrane. Functionally, probable polyketide synthase. The polypeptide is Probable polyketide synthase 3 (pks3) (Dictyostelium discoideum (Social amoeba)).